Reading from the N-terminus, the 539-residue chain is Chaperone Ric-8A (539 aa).

It belongs to the synembryn family.

The protein resides in the cytoplasm. The protein localises to the cell cortex. In terms of biological role, chaperone that specifically binds and folds nascent G alpha proteins prior to G protein heterotrimer formation, promoting their stability and activity: folds GNAI1, GNAO1, GNA13 and GNAQ. Does not fold G(s) G-alpha proteins GNAS nor GNAL. Also acts as a guanine nucleotide exchange factor (GEF) for G alpha proteins by stimulating exchange of bound GDP for free GTP. This Xenopus tropicalis (Western clawed frog) protein is Chaperone Ric-8A (ric8a).